Consider the following 579-residue polypeptide: uncharacterized protein (579 aa).

The segment at 1-100 (MSGRRRNHPG…APPCGPYPGE (100 aa)) is disordered. Polar residues predominate over residues 80-90 (GQQQSEPQHNS). 11 consecutive transmembrane segments (helical) span residues 148–168 (FAVD…AAAS), 175–195 (VALY…LIGP), 206–226 (VALA…IMNY), 228–248 (GATG…MMVL), 279–299 (VFGL…VEFV), 303–323 (LFKL…GALL), 378–398 (LWGN…PAFV), 407–427 (WVQL…NFAG), 448–468 (IAVT…MTTI), 504–524 (SEST…MVYT), and 526–546 (LWVG…QTVV).

To M.tuberculosis Rv0876c.

It localises to the cell membrane. This is an uncharacterized protein from Mycobacterium leprae (strain TN).